The sequence spans 201 residues: uncharacterized protein (201 aa).

This is an uncharacterized protein from Lepidoptera (butterflies and moths).